A 247-amino-acid chain; its full sequence is Uridylate kinase (247 aa).

Residue 14 to 17 (KLSG) participates in ATP binding. An involved in allosteric activation by GTP region spans residues 22–27 (GERGVG). Gly56 contacts UMP. ATP contacts are provided by Gly57 and Arg61. Residues Asp76 and 137–144 (IGSPYFST) each bind UMP. ATP contacts are provided by Asn165, Tyr171, and Asp174.

This sequence belongs to the UMP kinase family. Homohexamer.

The protein localises to the cytoplasm. The catalysed reaction is UMP + ATP = UDP + ADP. The protein operates within pyrimidine metabolism; CTP biosynthesis via de novo pathway; UDP from UMP (UMPK route): step 1/1. Allosterically activated by GTP. Inhibited by UTP, 5-bromo-UTP and 5-iodo-UTP. Functionally, catalyzes the reversible phosphorylation of UMP to UDP, with ATP as the most efficient phosphate donor. The polypeptide is Uridylate kinase (pyrH) (Streptococcus pneumoniae serotype 4 (strain ATCC BAA-334 / TIGR4)).